Reading from the N-terminus, the 438-residue chain is GTPase Der (438 aa).

2 consecutive EngA-type G domains span residues 4-168 (PIVA…PKGY) and 177-352 (IRIA…TNYS). Residues 10–17 (GRPNVGKS), 57–61 (DTGGI), 120–123 (NKID), 183–190 (GKPNVGKS), 230–234 (DTAGL), and 295–298 (NKWD) each bind GTP. The 85-residue stretch at 353 to 437 (KRISTGVLND…GIKMEFRERK (85 aa)) folds into the KH-like domain.

Belongs to the TRAFAC class TrmE-Era-EngA-EngB-Septin-like GTPase superfamily. EngA (Der) GTPase family. In terms of assembly, associates with the 50S ribosomal subunit.

Its function is as follows. GTPase that plays an essential role in the late steps of ribosome biogenesis. The protein is GTPase Der of Clostridium tetani (strain Massachusetts / E88).